Consider the following 230-residue polypeptide: Heptaprenylglyceryl phosphate synthase (230 aa).

Residue K12 coordinates sn-glycerol 1-phosphate. Residues D14 and T40 each coordinate Mg(2+). Residues 159–164 (YIEYSG), G189, and 209–210 (GD) contribute to the sn-glycerol 1-phosphate site.

Belongs to the GGGP/HepGP synthase family. Group I subfamily. Homodimer. Requires Mg(2+) as cofactor.

It carries out the reaction sn-glycerol 1-phosphate + all-trans-heptaprenyl diphosphate = 3-heptaprenyl-sn-glycero-1-phosphate + diphosphate. It functions in the pathway membrane lipid metabolism; glycerophospholipid metabolism. In terms of biological role, prenyltransferase that catalyzes in vivo the transfer of the heptaprenyl moiety of heptaprenyl pyrophosphate (HepPP; 35 carbon atoms) to the C3 hydroxyl of sn-glycerol-1-phosphate (G1P), producing heptaprenylglyceryl phosphate (HepGP). This reaction is an ether-bond-formation step in the biosynthesis of archaea-type G1P-based membrane lipids found in Bacillales. The sequence is that of Heptaprenylglyceryl phosphate synthase from Staphylococcus aureus (strain MRSA252).